A 308-amino-acid polypeptide reads, in one-letter code: Probable GTP 3',8-cyclase (308 aa).

In terms of domain architecture, Radical SAM core spans 4–224 (RFGRPLEDLR…QIRKKHFRPR (221 aa)). Arginine 13 is a binding site for GTP. 3 residues coordinate [4Fe-4S] cluster: cysteine 20, cysteine 24, and cysteine 27. Lysine 60 provides a ligand contact to GTP. Glycine 64 contributes to the S-adenosyl-L-methionine binding site. Threonine 90 provides a ligand contact to GTP. Serine 114 provides a ligand contact to S-adenosyl-L-methionine. GTP is bound at residue lysine 151. [4Fe-4S] cluster-binding residues include cysteine 245 and cysteine 248. 250-252 (RIR) contacts GTP. [4Fe-4S] cluster is bound at residue cysteine 262.

Belongs to the radical SAM superfamily. MoaA family. Requires [4Fe-4S] cluster as cofactor.

The enzyme catalyses GTP + AH2 + S-adenosyl-L-methionine = (8S)-3',8-cyclo-7,8-dihydroguanosine 5'-triphosphate + 5'-deoxyadenosine + L-methionine + A + H(+). Its pathway is cofactor biosynthesis; molybdopterin biosynthesis. Functionally, catalyzes the cyclization of GTP to (8S)-3',8-cyclo-7,8-dihydroguanosine 5'-triphosphate. The polypeptide is Probable GTP 3',8-cyclase (Saccharolobus islandicus (strain L.S.2.15 / Lassen #1) (Sulfolobus islandicus)).